A 174-amino-acid chain; its full sequence is FMN-dependent NADPH-azoreductase (174 aa).

FMN-binding positions include 9-11 (TPR), 15-16 (RT), 73-76 (EYHS), and glycine 106.

This sequence belongs to the azoreductase type 2 family. As to quaternary structure, homotetramer. FMN serves as cofactor.

In terms of biological role, catalyzes the reductive cleavage of azo bond in aromatic azo compounds to the corresponding amines. Requires NADPH, but not NADH, as an electron donor for its activity. This Bacillus subtilis (strain 168) protein is FMN-dependent NADPH-azoreductase (azr).